Reading from the N-terminus, the 172-residue chain is Nicotinamide-nucleotide adenylyltransferase (172 aa).

The protein belongs to the archaeal NMN adenylyltransferase family.

It localises to the cytoplasm. It carries out the reaction beta-nicotinamide D-ribonucleotide + ATP + H(+) = diphosphate + NAD(+). It functions in the pathway cofactor biosynthesis; NAD(+) biosynthesis; NAD(+) from nicotinamide D-ribonucleotide: step 1/1. This Methanococcus aeolicus (strain ATCC BAA-1280 / DSM 17508 / OCM 812 / Nankai-3) protein is Nicotinamide-nucleotide adenylyltransferase.